The sequence spans 150 residues: Large ribosomal subunit protein bL9 (150 aa).

This sequence belongs to the bacterial ribosomal protein bL9 family.

Binds to the 23S rRNA. This chain is Large ribosomal subunit protein bL9, found in Leuconostoc citreum (strain KM20).